The chain runs to 514 residues: ATP synthase subunit alpha 2 (514 aa).

170-177 (GDRQTGKT) serves as a coordination point for ATP.

It belongs to the ATPase alpha/beta chains family. As to quaternary structure, F-type ATPases have 2 components, CF(1) - the catalytic core - and CF(0) - the membrane proton channel. CF(1) has five subunits: alpha(3), beta(3), gamma(1), delta(1), epsilon(1). CF(0) has three main subunits: a(1), b(2) and c(9-12). The alpha and beta chains form an alternating ring which encloses part of the gamma chain. CF(1) is attached to CF(0) by a central stalk formed by the gamma and epsilon chains, while a peripheral stalk is formed by the delta and b chains.

It is found in the cell inner membrane. It catalyses the reaction ATP + H2O + 4 H(+)(in) = ADP + phosphate + 5 H(+)(out). In terms of biological role, produces ATP from ADP in the presence of a proton gradient across the membrane. The alpha chain is a regulatory subunit. This chain is ATP synthase subunit alpha 2, found in Hahella chejuensis (strain KCTC 2396).